The chain runs to 252 residues: Triosephosphate isomerase (252 aa).

A substrate-binding site is contributed by N10–K12. The active-site Electrophile is the H96. The active-site Proton acceptor is E168. Substrate-binding positions include G174, S214, and G235–G236.

Belongs to the triosephosphate isomerase family. Homodimer.

The protein localises to the cytoplasm. It catalyses the reaction D-glyceraldehyde 3-phosphate = dihydroxyacetone phosphate. Its pathway is carbohydrate biosynthesis; gluconeogenesis. It participates in carbohydrate degradation; glycolysis; D-glyceraldehyde 3-phosphate from glycerone phosphate: step 1/1. Functionally, involved in the gluconeogenesis. Catalyzes stereospecifically the conversion of dihydroxyacetone phosphate (DHAP) to D-glyceraldehyde-3-phosphate (G3P). The sequence is that of Triosephosphate isomerase from Streptococcus mutans serotype c (strain ATCC 700610 / UA159).